Here is a 262-residue protein sequence, read N- to C-terminus: Carbonic anhydrase 1 (262 aa).

Position 2 is an N-acetylalanine (A2). The Alpha-carbonic anhydrase domain maps to 4 to 261 (LNWSYEGENG…LKGRQVKASF (258 aa)). The active-site Proton donor/acceptor is the H65. Positions 95, 97, and 120 each coordinate Zn(2+). Substrate is bound by residues T200 and 200–201 (TH).

Belongs to the alpha-carbonic anhydrase family. Zn(2+) is required as a cofactor.

The protein resides in the cytoplasm. The catalysed reaction is hydrogencarbonate + H(+) = CO2 + H2O. The enzyme catalyses urea = cyanamide + H2O. With respect to regulation, inhibited by acetazolamide. Functionally, catalyzes the reversible hydration of carbon dioxide. Can hydrate cyanamide to urea. The sequence is that of Carbonic anhydrase 1 (CA1) from Monodelphis domestica (Gray short-tailed opossum).